The chain runs to 174 residues: RNA pyrophosphohydrolase (174 aa).

The Nudix hydrolase domain occupies 6-149 (GFRANVGIII…KRDVYRKVMK (144 aa)). Residues 38–59 (GGVDDGETAEEAMYRELYEEVG) carry the Nudix box motif.

The protein belongs to the Nudix hydrolase family. RppH subfamily. A divalent metal cation is required as a cofactor.

Functionally, accelerates the degradation of transcripts by removing pyrophosphate from the 5'-end of triphosphorylated RNA, leading to a more labile monophosphorylated state that can stimulate subsequent ribonuclease cleavage. The chain is RNA pyrophosphohydrolase from Shewanella baltica (strain OS223).